The sequence spans 417 residues: Gamma-glutamyl phosphate reductase (417 aa).

Belongs to the gamma-glutamyl phosphate reductase family.

It is found in the cytoplasm. It catalyses the reaction L-glutamate 5-semialdehyde + phosphate + NADP(+) = L-glutamyl 5-phosphate + NADPH + H(+). The protein operates within amino-acid biosynthesis; L-proline biosynthesis; L-glutamate 5-semialdehyde from L-glutamate: step 2/2. Functionally, catalyzes the NADPH-dependent reduction of L-glutamate 5-phosphate into L-glutamate 5-semialdehyde and phosphate. The product spontaneously undergoes cyclization to form 1-pyrroline-5-carboxylate. This is Gamma-glutamyl phosphate reductase from Haemophilus influenzae (strain PittGG).